We begin with the raw amino-acid sequence, 376 residues long: Queuine tRNA-ribosyltransferase (376 aa).

The active-site Proton acceptor is the D89. Residues 89–93, D143, Q187, and G214 contribute to the substrate site; that span reads DSGGF. The tract at residues 245-251 is RNA binding; the sequence is GVGKPQD. Residue D264 is the Nucleophile of the active site. An RNA binding; important for wobble base 34 recognition region spans residues 269–273; that stretch reads TRNAR. Residues C302, C304, C307, and H333 each contribute to the Zn(2+) site.

The protein belongs to the queuine tRNA-ribosyltransferase family. As to quaternary structure, homodimer. Within each dimer, one monomer is responsible for RNA recognition and catalysis, while the other monomer binds to the replacement base PreQ1. Requires Zn(2+) as cofactor.

The catalysed reaction is 7-aminomethyl-7-carbaguanine + guanosine(34) in tRNA = 7-aminomethyl-7-carbaguanosine(34) in tRNA + guanine. The protein operates within tRNA modification; tRNA-queuosine biosynthesis. Functionally, catalyzes the base-exchange of a guanine (G) residue with the queuine precursor 7-aminomethyl-7-deazaguanine (PreQ1) at position 34 (anticodon wobble position) in tRNAs with GU(N) anticodons (tRNA-Asp, -Asn, -His and -Tyr). Catalysis occurs through a double-displacement mechanism. The nucleophile active site attacks the C1' of nucleotide 34 to detach the guanine base from the RNA, forming a covalent enzyme-RNA intermediate. The proton acceptor active site deprotonates the incoming PreQ1, allowing a nucleophilic attack on the C1' of the ribose to form the product. After dissociation, two additional enzymatic reactions on the tRNA convert PreQ1 to queuine (Q), resulting in the hypermodified nucleoside queuosine (7-(((4,5-cis-dihydroxy-2-cyclopenten-1-yl)amino)methyl)-7-deazaguanosine). The protein is Queuine tRNA-ribosyltransferase of Erwinia tasmaniensis (strain DSM 17950 / CFBP 7177 / CIP 109463 / NCPPB 4357 / Et1/99).